The sequence spans 490 residues: Adenylosuccinate lyase (490 aa).

Alanine 2 bears the N-acetylalanine mark. Substrate contacts are provided by residues 26–27 (RY), 91–93 (RHD), and 117–118 (TS). N6-acetyllysine is present on lysine 153. Catalysis depends on histidine 165, which acts as the Proton donor/acceptor. Glutamine 247 lines the substrate pocket. Serine 295 acts as the Proton donor/acceptor in catalysis. Lysine 301 bears the N6-acetyllysine mark. 4 residues coordinate substrate: arginine 309, arginine 335, serine 340, and arginine 344. Lysine 421 participates in a covalent cross-link: Glycyl lysine isopeptide (Lys-Gly) (interchain with G-Cter in SUMO1).

This sequence belongs to the lyase 1 family. Adenylosuccinate lyase subfamily. Homotetramer. Residues from neighboring subunits contribute catalytic and substrate-binding residues to each active site.

The catalysed reaction is N(6)-(1,2-dicarboxyethyl)-AMP = fumarate + AMP. The enzyme catalyses (2S)-2-[5-amino-1-(5-phospho-beta-D-ribosyl)imidazole-4-carboxamido]succinate = 5-amino-1-(5-phospho-beta-D-ribosyl)imidazole-4-carboxamide + fumarate. It functions in the pathway purine metabolism; AMP biosynthesis via de novo pathway; AMP from IMP: step 2/2. The protein operates within purine metabolism; IMP biosynthesis via de novo pathway; 5-amino-1-(5-phospho-D-ribosyl)imidazole-4-carboxamide from 5-amino-1-(5-phospho-D-ribosyl)imidazole-4-carboxylate: step 2/2. Catalyzes two non-sequential steps in de novo AMP synthesis: converts (S)-2-(5-amino-1-(5-phospho-D-ribosyl)imidazole-4-carboxamido)succinate (SAICAR) to fumarate plus 5-amino-1-(5-phospho-D-ribosyl)imidazole-4-carboxamide, and thereby also contributes to de novo IMP synthesis, and converts succinyladenosine monophosphate (SAMP) to AMP and fumarate. In Bos taurus (Bovine), this protein is Adenylosuccinate lyase (ADSL).